The following is a 104-amino-acid chain: Protein RnfH (104 aa).

The interval 80–104 is disordered; it reads PLTADPKLNRKRRAKEKASAGKASN.

It belongs to the UPF0125 (RnfH) family.

The protein is Protein RnfH of Alcanivorax borkumensis (strain ATCC 700651 / DSM 11573 / NCIMB 13689 / SK2).